The following is a 346-amino-acid chain: Phosphoribosylformylglycinamidine cyclo-ligase (346 aa).

This sequence belongs to the AIR synthase family.

It is found in the cytoplasm. The enzyme catalyses 2-formamido-N(1)-(5-O-phospho-beta-D-ribosyl)acetamidine + ATP = 5-amino-1-(5-phospho-beta-D-ribosyl)imidazole + ADP + phosphate + H(+). Its pathway is purine metabolism; IMP biosynthesis via de novo pathway; 5-amino-1-(5-phospho-D-ribosyl)imidazole from N(2)-formyl-N(1)-(5-phospho-D-ribosyl)glycinamide: step 2/2. This chain is Phosphoribosylformylglycinamidine cyclo-ligase, found in Photorhabdus laumondii subsp. laumondii (strain DSM 15139 / CIP 105565 / TT01) (Photorhabdus luminescens subsp. laumondii).